Here is a 165-residue protein sequence, read N- to C-terminus: Thiol peroxidase (165 aa).

The region spanning 18 to 165 (PQKGAQAPAF…PNYAAALAAL (148 aa)) is the Thioredoxin domain. Cys-60 functions as the Cysteine sulfenic acid (-SOH) intermediate in the catalytic mechanism. A disulfide bridge connects residues Cys-60 and Cys-94.

The protein belongs to the peroxiredoxin family. Tpx subfamily. Homodimer.

It carries out the reaction a hydroperoxide + [thioredoxin]-dithiol = an alcohol + [thioredoxin]-disulfide + H2O. In terms of biological role, thiol-specific peroxidase that catalyzes the reduction of hydrogen peroxide and organic hydroperoxides to water and alcohols, respectively. Plays a role in cell protection against oxidative stress by detoxifying peroxides. This is Thiol peroxidase from Pseudomonas aeruginosa (strain ATCC 15692 / DSM 22644 / CIP 104116 / JCM 14847 / LMG 12228 / 1C / PRS 101 / PAO1).